Consider the following 665-residue polypeptide: Auxin response factor 1 (665 aa).

Residues 124–226 (FCKTLTASDT…ELRVGVRRHM (103 aa)) constitute a DNA-binding region (TF-B3). Disordered stretches follow at residues 356 to 408 (VANS…SVPL), 496 to 542 (PVPS…RQIR), and 645 to 665 (KADA…AGSR). Composition is skewed to polar residues over residues 497–519 (VPSN…SDIP), 530–542 (LRSP…RQIR), and 651–665 (NGNT…AGSR). Residues 542-635 (RSCTKVHMQG…EVKKLSPKNK (94 aa)) enclose the PB1 domain.

It belongs to the ARF family. Homodimers and heterodimers. Interacts with the auxin-responsive proteins IAA12, IAA13, IAA17 and with ARF2. Binds to RIN13 in the nucleus. In terms of tissue distribution, expressed in the whole plant.

The protein resides in the nucleus. The protein localises to the cytoplasm. In terms of biological role, auxin response factors (ARFs) are transcriptional factors that bind specifically to the DNA sequence 5'-TGTCTC-3' found in the auxin-responsive promoter elements (AuxREs). Seems to act as transcriptional repressor. Formation of heterodimers with Aux/IAA proteins may alter their ability to modulate early auxin response genes expression. Promotes flowering, stamen development, floral organ abscission and fruit dehiscence. Acts as a repressor of IAA2, IAA3 and IAA7. Together with RIN13, promotes leaf senescence and cell death. The protein is Auxin response factor 1 of Arabidopsis thaliana (Mouse-ear cress).